The primary structure comprises 205 residues: GTP cyclohydrolase-2 (205 aa).

A GTP-binding site is contributed by 49–53 (RIHSE). Zn(2+) contacts are provided by cysteine 54, cysteine 65, and cysteine 67. Residues glutamine 70, 92–94 (EGR), and threonine 114 contribute to the GTP site. The active-site Proton acceptor is aspartate 126. Residue arginine 128 is the Nucleophile of the active site. GTP contacts are provided by threonine 149 and lysine 154.

Belongs to the GTP cyclohydrolase II family. Zn(2+) is required as a cofactor.

The enzyme catalyses GTP + 4 H2O = 2,5-diamino-6-hydroxy-4-(5-phosphoribosylamino)-pyrimidine + formate + 2 phosphate + 3 H(+). Its pathway is cofactor biosynthesis; riboflavin biosynthesis; 5-amino-6-(D-ribitylamino)uracil from GTP: step 1/4. Functionally, catalyzes the conversion of GTP to 2,5-diamino-6-ribosylamino-4(3H)-pyrimidinone 5'-phosphate (DARP), formate and pyrophosphate. This Shewanella sediminis (strain HAW-EB3) protein is GTP cyclohydrolase-2.